Consider the following 312-residue polypeptide: Malate dehydrogenase (312 aa).

NAD(+)-binding positions include 7–13 (GASGGIG) and Asp34. Arg81 and Arg87 together coordinate substrate. Residues Asn94 and 117 to 119 (ITN) contribute to the NAD(+) site. 2 residues coordinate substrate: Asn119 and Arg153. Catalysis depends on His177, which acts as the Proton acceptor. Met227 is a binding site for NAD(+).

It belongs to the LDH/MDH superfamily. MDH type 1 family. As to quaternary structure, homodimer.

It carries out the reaction (S)-malate + NAD(+) = oxaloacetate + NADH + H(+). Catalyzes the reversible oxidation of malate to oxaloacetate. The polypeptide is Malate dehydrogenase (Actinobacillus succinogenes (strain ATCC 55618 / DSM 22257 / CCUG 43843 / 130Z)).